The sequence spans 476 residues: Ribulose bisphosphate carboxylase large chain (476 aa).

Residues N124 and T174 each contribute to the substrate site. K176 (proton acceptor) is an active-site residue. K178 contacts substrate. Mg(2+) is bound by residues K202, D204, and E205. The residue at position 202 (K202) is an N6-carboxylysine. The active-site Proton acceptor is the H295. Positions 296, 328, and 380 each coordinate substrate.

Belongs to the RuBisCO large chain family. Type I subfamily. In terms of assembly, heterohexadecamer of 8 large chains and 8 small chains; disulfide-linked. The disulfide link is formed within the large subunit homodimers. It depends on Mg(2+) as a cofactor. The disulfide bond which can form in the large chain dimeric partners within the hexadecamer appears to be associated with oxidative stress and protein turnover.

It localises to the carboxysome. The catalysed reaction is 2 (2R)-3-phosphoglycerate + 2 H(+) = D-ribulose 1,5-bisphosphate + CO2 + H2O. The enzyme catalyses D-ribulose 1,5-bisphosphate + O2 = 2-phosphoglycolate + (2R)-3-phosphoglycerate + 2 H(+). RuBisCO catalyzes two reactions: the carboxylation of D-ribulose 1,5-bisphosphate, the primary event in carbon dioxide fixation, as well as the oxidative fragmentation of the pentose substrate in the photorespiration process. Both reactions occur simultaneously and in competition at the same active site. The polypeptide is Ribulose bisphosphate carboxylase large chain (Trichodesmium erythraeum (strain IMS101)).